The following is a 159-amino-acid chain: Ribosomal RNA large subunit methyltransferase H (159 aa).

Residues leucine 76, glycine 108, and 127–132 (FSKMTF) each bind S-adenosyl-L-methionine.

The protein belongs to the RNA methyltransferase RlmH family. As to quaternary structure, homodimer.

The protein resides in the cytoplasm. It carries out the reaction pseudouridine(1915) in 23S rRNA + S-adenosyl-L-methionine = N(3)-methylpseudouridine(1915) in 23S rRNA + S-adenosyl-L-homocysteine + H(+). Its function is as follows. Specifically methylates the pseudouridine at position 1915 (m3Psi1915) in 23S rRNA. In Bifidobacterium longum (strain DJO10A), this protein is Ribosomal RNA large subunit methyltransferase H.